Consider the following 408-residue polypeptide: UDP-glucose 4-epimerase 2 (408 aa).

13–44 (TVLVTGGAGYIGSHAVLQLLLAGFRAVVVDNL) serves as a coordination point for NAD(+). Residue Ser138 coordinates substrate. The active-site Proton acceptor is Tyr162. The disordered stretch occupies residues 369 to 408 (GSPKQNGHCTNGFSESTRHNGHNGYGLVDSAKHNGNGHFH). The span at 370-383 (SPKQNGHCTNGFSE) shows a compositional bias: polar residues.

Belongs to the NAD(P)-dependent epimerase/dehydratase family. Requires NAD(+) as cofactor.

It catalyses the reaction UDP-alpha-D-glucose = UDP-alpha-D-galactose. Its pathway is carbohydrate metabolism; galactose metabolism. Functionally, catalyzes the interconversion between UDP-glucose and UDP-galactose. The polypeptide is UDP-glucose 4-epimerase 2 (UGE-2) (Oryza sativa subsp. japonica (Rice)).